The primary structure comprises 280 residues: MGWHDGCIRCMVGVPFASVIATVLCFAGVALFCGCGHEALSGTEKLIETYFSKNYQEYEYLIHVINAFQYVIYGIAIFFFLFGILLLAEGFYTTTAIKHILGEFKPPAIKGGLISTVTGGTPKGRSTRGRQPVHTIELICRCLGKWLGHPDKFVGVTYIITILWILIFACSAVPVYIYFNTWVTCQSIAFPGKTTTSVSTLCSDARMYGVLPWNAFPGKVCGTSLLAICKTSEFQMTFHLFIAAFVGAAATLVALLTYMVGASFNYAVLRVTGRSDRSKF.

The Cytoplasmic portion of the chain corresponds to 1–10 (MGWHDGCIRC). Residues C7 and C10 are each lipidated (S-palmitoyl cysteine). A helical membrane pass occupies residues 11 to 36 (MVGVPFASVIATVLCFAGVALFCGCG). The Extracellular segment spans residues 37–59 (HEALSGTEKLIETYFSKNYQEYE). A helical membrane pass occupies residues 60–88 (YLIHVINAFQYVIYGIAIFFFLFGILLLA). The Cytoplasmic segment spans residues 89-152 (EGFYTTTAIK…LGKWLGHPDK (64 aa)). Residues C140 and C142 are each lipidated (S-palmitoyl cysteine). Residues 153-179 (FVGVTYIITILWILIFACSAVPVYIYF) traverse the membrane as a helical segment. Residues 180-239 (NTWVTCQSIAFPGKTTTSVSTLCSDARMYGVLPWNAFPGKVCGTSLLAICKTSEFQMTFH) are Extracellular-facing. Cystine bridges form between C185-C229 and C202-C221. The chain crosses the membrane as a helical span at residues 240 to 269 (LFIAAFVGAAATLVALLTYMVGASFNYAVL). The Cytoplasmic portion of the chain corresponds to 270–280 (RVTGRSDRSKF).

It belongs to the myelin proteolipid protein family.

Its subcellular location is the cell membrane. Its function is as follows. This is the major myelin protein from the central nervous system. It plays an important role in the formation or maintenance of the multilamellar structure of myelin. The polypeptide is Myelin proteolipid protein A (plp1-a) (Xenopus laevis (African clawed frog)).